Reading from the N-terminus, the 247-residue chain is ATP synthase subunit a (247 aa).

A run of 6 helical transmembrane segments spans residues 23–43 (ISFT…TLFL), 90–110 (LFMF…VIGF), 116–136 (VIVT…IGFA), 145–165 (MFFP…IELI), 194–214 (GFVV…FAFL), and 215–235 (SAIT…FTIL).

The protein belongs to the ATPase A chain family. As to quaternary structure, F-type ATPases have 2 components, CF(1) - the catalytic core - and CF(0) - the membrane proton channel. CF(1) has five subunits: alpha(3), beta(3), gamma(1), delta(1), epsilon(1). CF(0) has three main subunits: a(1), b(2) and c(9-12). The alpha and beta chains form an alternating ring which encloses part of the gamma chain. CF(1) is attached to CF(0) by a central stalk formed by the gamma and epsilon chains, while a peripheral stalk is formed by the delta and b chains.

The protein localises to the cell inner membrane. Its function is as follows. Key component of the proton channel; it plays a direct role in the translocation of protons across the membrane. The protein is ATP synthase subunit a of Paramagnetospirillum magneticum (strain ATCC 700264 / AMB-1) (Magnetospirillum magneticum).